Reading from the N-terminus, the 319-residue chain is Cutinase cut1 (319 aa).

Positions 1 to 58 (MPPHAARPGPAQNRRGRAMAVITPRRERSSLLSRALRFTAAAATALVTAVSLAAPAHA) are cleaved as a signal peptide. Tyr118 provides a ligand contact to poly(ethylene terephthalate). The Nucleophile role is filled by Ser188. The poly(ethylene terephthalate) site is built by Met189 and Trp213. Active-site charge relay system residues include Asp234 and His266. A disulfide bridge connects residues Cys299 and Cys317.

Belongs to the AB hydrolase superfamily.

It is found in the secreted. Its subcellular location is the periplasm. It catalyses the reaction an acetyl ester + H2O = an aliphatic alcohol + acetate + H(+). The enzyme catalyses a butanoate ester + H2O = an aliphatic alcohol + butanoate + H(+). The catalysed reaction is pentanoate ester + H2O = pentanoate + an aliphatic alcohol + H(+). It carries out the reaction an octanoate ester + H2O = an aliphatic alcohol + octanoate + H(+). It catalyses the reaction decanoate ester + H2O = decanoate + an aliphatic alcohol + H(+). The enzyme catalyses a dodecanoate ester + H2O = an aliphatic alcohol + dodecanoate + H(+). The catalysed reaction is a tetradecanoate ester + H2O = an aliphatic alcohol + tetradecanoate + H(+). It carries out the reaction hexadecanoate ester + H2O = an aliphatic alcohol + hexadecanoate + H(+). It catalyses the reaction cutin + H2O = cutin monomers.. The enzyme catalyses (ethylene terephthalate)(n) + H2O = (ethylene terephthalate)(n-1) + 4-[(2-hydroxyethoxy)carbonyl]benzoate + H(+). With respect to regulation, activated by magnesium ions. Activated by calcium ions. In terms of biological role, catalyzes the hydrolysis of cutin, a polyester that forms the structure of plant cuticle. Shows esterase activity towards p-nitrophenol-linked aliphatic esters (pNP-aliphatic esters). Capable of degrading the plastic poly(ethylene terephthalate) (PET), the most abundant polyester plastic in the world. In Thermobifida fusca (Thermomonospora fusca), this protein is Cutinase cut1.